The primary structure comprises 257 residues: 5'-nucleotidase SurE (257 aa).

A divalent metal cation is bound by residues aspartate 8, aspartate 9, serine 40, and asparagine 92.

The protein belongs to the SurE nucleotidase family. It depends on a divalent metal cation as a cofactor.

The protein resides in the cytoplasm. It carries out the reaction a ribonucleoside 5'-phosphate + H2O = a ribonucleoside + phosphate. In terms of biological role, nucleotidase that shows phosphatase activity on nucleoside 5'-monophosphates. The protein is 5'-nucleotidase SurE of Rhizobium etli (strain ATCC 51251 / DSM 11541 / JCM 21823 / NBRC 15573 / CFN 42).